Reading from the N-terminus, the 940-residue chain is UvrABC system protein A (940 aa).

Residue G31–S38 coordinates ATP. A C4-type zinc finger spans residues C253 to C280. ABC transporter domains are found at residues W310–L587 and A607–K937. Residue G640–S647 participates in ATP binding. The C4-type zinc-finger motif lies at C740–C766.

Belongs to the ABC transporter superfamily. UvrA family. In terms of assembly, forms a heterotetramer with UvrB during the search for lesions. Interacts with TRCF (Mfd). UvrB and TRCF binding to UvrA could be mutually exclusive.

Its subcellular location is the cytoplasm. The UvrABC repair system catalyzes the recognition and processing of DNA lesions. UvrA is an ATPase and a DNA-binding protein. A damage recognition complex composed of 2 UvrA and 2 UvrB subunits scans DNA for abnormalities. When the presence of a lesion has been verified by UvrB, the UvrA molecules dissociate. This is UvrABC system protein A from Escherichia coli (strain K12).